Reading from the N-terminus, the 139-residue chain is Hydrogenase maturation factor HypA (139 aa).

His2 contributes to the Ni(2+) binding site. Positions 73, 76, 110, and 113 each coordinate Zn(2+).

The protein belongs to the HypA/HybF family.

Its function is as follows. Involved in the maturation of [NiFe] hydrogenases. Required for nickel insertion into the metal center of the hydrogenase. This is Hydrogenase maturation factor HypA from Pyrococcus abyssi (strain GE5 / Orsay).